Reading from the N-terminus, the 138-residue chain is Acidic phospholipase A2 ammodytin I1 (138 aa).

The N-terminal stretch at 1–16 (MRILWIVAVCLIGAEG) is a signal peptide. Disulfide bonds link cysteine 42-cysteine 131, cysteine 44-cysteine 60, cysteine 59-cysteine 111, cysteine 65-cysteine 138, cysteine 66-cysteine 104, cysteine 73-cysteine 97, and cysteine 91-cysteine 102. The Ca(2+) site is built by tyrosine 43, glycine 45, and glycine 47. Histidine 63 is a catalytic residue. Aspartate 64 contacts Ca(2+). The active site involves aspartate 105.

The protein belongs to the phospholipase A2 family. Group II subfamily. D49 sub-subfamily. Ca(2+) is required as a cofactor. As to expression, expressed by the venom gland.

It localises to the secreted. It catalyses the reaction a 1,2-diacyl-sn-glycero-3-phosphocholine + H2O = a 1-acyl-sn-glycero-3-phosphocholine + a fatty acid + H(+). Functionally, snake venom phospholipase A2 (PLA2) that has enzymatic activity but is non-toxic. PLA2 catalyzes the calcium-dependent hydrolysis of the 2-acyl groups in 3-sn-phosphoglycerides. The chain is Acidic phospholipase A2 ammodytin I1 from Vipera ammodytes ammodytes (Western sand viper).